The sequence spans 495 residues: RNA-binding KH domain-containing protein PEPPER (495 aa).

3 KH domains span residues 73 to 140 (DCVF…MDAV), 165 to 234 (FSSV…LEAI), and 340 to 403 (QVSQ…EQLI). Positions 474-495 (GQTYGSEYRPASDVGGYSSYNL) are disordered.

Interacts with HUA1 and HEN4. Detected in roots, shoots, leaves, flowers and fruits.

It localises to the nucleus. In terms of biological role, regulates vegetative and gynoecium development. In concert with HUA2, antagonizes FLK by positively regulating FLC probably at transcriptional and post-transcriptional levels, and thus acts as a negative regulator of flowering. This is RNA-binding KH domain-containing protein PEPPER from Arabidopsis thaliana (Mouse-ear cress).